The chain runs to 288 residues: Fructose-bisphosphate aldolase (288 aa).

Residue S49 coordinates D-glyceraldehyde 3-phosphate. Residue D84 is the Proton donor of the active site. H85, D105, E135, and H177 together coordinate Zn(2+). Residue G178 coordinates dihydroxyacetone phosphate. H206 contacts Zn(2+). Dihydroxyacetone phosphate contacts are provided by residues 207–209 (GGS) and 228–231 (NINT).

The protein belongs to the class II fructose-bisphosphate aldolase family. In terms of assembly, homodimer. Zn(2+) serves as cofactor.

It carries out the reaction beta-D-fructose 1,6-bisphosphate = D-glyceraldehyde 3-phosphate + dihydroxyacetone phosphate. It functions in the pathway carbohydrate degradation; glycolysis; D-glyceraldehyde 3-phosphate and glycerone phosphate from D-glucose: step 4/4. Catalyzes the aldol condensation of dihydroxyacetone phosphate (DHAP or glycerone-phosphate) with glyceraldehyde 3-phosphate (G3P) to form fructose 1,6-bisphosphate (FBP) in gluconeogenesis and the reverse reaction in glycolysis. The polypeptide is Fructose-bisphosphate aldolase (fba) (Mycoplasma genitalium (strain ATCC 33530 / DSM 19775 / NCTC 10195 / G37) (Mycoplasmoides genitalium)).